The chain runs to 384 residues: Histidinol-phosphate aminotransferase 2 (384 aa).

Residue K236 is modified to N6-(pyridoxal phosphate)lysine.

Belongs to the class-II pyridoxal-phosphate-dependent aminotransferase family. Histidinol-phosphate aminotransferase subfamily. As to quaternary structure, homodimer. Requires pyridoxal 5'-phosphate as cofactor.

The catalysed reaction is L-histidinol phosphate + 2-oxoglutarate = 3-(imidazol-4-yl)-2-oxopropyl phosphate + L-glutamate. It participates in amino-acid biosynthesis; L-histidine biosynthesis; L-histidine from 5-phospho-alpha-D-ribose 1-diphosphate: step 7/9. In Nostoc sp. (strain PCC 7120 / SAG 25.82 / UTEX 2576), this protein is Histidinol-phosphate aminotransferase 2 (hisC2).